A 472-amino-acid chain; its full sequence is Argininosuccinate lyase (472 aa).

This sequence belongs to the lyase 1 family. Argininosuccinate lyase subfamily.

The protein localises to the cytoplasm. It carries out the reaction 2-(N(omega)-L-arginino)succinate = fumarate + L-arginine. The protein operates within amino-acid biosynthesis; L-arginine biosynthesis; L-arginine from L-ornithine and carbamoyl phosphate: step 3/3. The polypeptide is Argininosuccinate lyase (Maricaulis maris (strain MCS10) (Caulobacter maris)).